We begin with the raw amino-acid sequence, 259 residues long: Imidazole glycerol phosphate synthase subunit HisF (259 aa).

Catalysis depends on residues D11 and D130.

The protein belongs to the HisA/HisF family. As to quaternary structure, heterodimer of HisH and HisF.

The protein resides in the cytoplasm. The enzyme catalyses 5-[(5-phospho-1-deoxy-D-ribulos-1-ylimino)methylamino]-1-(5-phospho-beta-D-ribosyl)imidazole-4-carboxamide + L-glutamine = D-erythro-1-(imidazol-4-yl)glycerol 3-phosphate + 5-amino-1-(5-phospho-beta-D-ribosyl)imidazole-4-carboxamide + L-glutamate + H(+). It functions in the pathway amino-acid biosynthesis; L-histidine biosynthesis; L-histidine from 5-phospho-alpha-D-ribose 1-diphosphate: step 5/9. Its function is as follows. IGPS catalyzes the conversion of PRFAR and glutamine to IGP, AICAR and glutamate. The HisF subunit catalyzes the cyclization activity that produces IGP and AICAR from PRFAR using the ammonia provided by the HisH subunit. The chain is Imidazole glycerol phosphate synthase subunit HisF from Desulforapulum autotrophicum (strain ATCC 43914 / DSM 3382 / VKM B-1955 / HRM2) (Desulfobacterium autotrophicum).